The following is a 190-amino-acid chain: GTP cyclohydrolase 1 (190 aa).

Residues cysteine 78, histidine 81, and cysteine 150 each contribute to the Zn(2+) site.

It belongs to the GTP cyclohydrolase I family. Toroid-shaped homodecamer, composed of two pentamers of five dimers.

The catalysed reaction is GTP + H2O = 7,8-dihydroneopterin 3'-triphosphate + formate + H(+). Its pathway is cofactor biosynthesis; 7,8-dihydroneopterin triphosphate biosynthesis; 7,8-dihydroneopterin triphosphate from GTP: step 1/1. Its activity is regulated as follows. K(+) ions moderately increases the Vmax, whereas UTP and Ca(2+) and Mg(2+) ions drastically increase the Km for GTP. This chain is GTP cyclohydrolase 1 (folE), found in Bacillus subtilis (strain 168).